Consider the following 294-residue polypeptide: 33 kDa chaperonin (294 aa).

Disulfide bonds link cysteine 239-cysteine 241 and cysteine 272-cysteine 275.

It belongs to the HSP33 family. Post-translationally, under oxidizing conditions two disulfide bonds are formed involving the reactive cysteines. Under reducing conditions zinc is bound to the reactive cysteines and the protein is inactive.

It localises to the cytoplasm. In terms of biological role, redox regulated molecular chaperone. Protects both thermally unfolding and oxidatively damaged proteins from irreversible aggregation. Plays an important role in the bacterial defense system toward oxidative stress. This chain is 33 kDa chaperonin, found in Listeria welshimeri serovar 6b (strain ATCC 35897 / DSM 20650 / CCUG 15529 / CIP 8149 / NCTC 11857 / SLCC 5334 / V8).